We begin with the raw amino-acid sequence, 1365 residues long: Zinc finger protein 423 (1365 aa).

Positions 1 to 11 (MSRRKQAKPRS) are enriched in basic residues. Residues 1-69 (MSRRKQAKPR…SHDERVGEED (69 aa)) are disordered. A compositionally biased stretch (basic and acidic residues) spans 37–51 (VSERDSDRKESRAVG). The C2H2-type 1 zinc finger occupies 76-98 (FTCDNCQQDFECLADLTEHRTNH). Positions 99–126 (CPADGDDDPGLSWVASSPSSKDVASPSQ) are disordered. The span at 112–126 (VASSPSSKDVASPSQ) shows a compositional bias: low complexity. C2H2-type zinc fingers lie at residues 150 to 172 (YPCQ…EQIH), 178 to 200 (FKCT…VKLH), 206 to 228 (YSCQ…LKTH), and 234 to 256 (FKCS…MQAH). Positions 250 to 280 (QSHMQAHRKNKEHLAKKDQGKRDGSSSDVTE) are disordered. Residues 261–274 (EHLAKKDQGKRDGS) are compositionally biased toward basic and acidic residues. C2H2-type zinc fingers lie at residues 286-309 (YMCD…LTQH), 318-341 (LQCI…DRTH), and 346-368 (HKCP…LDSH). Positions 366–429 (DSHRQPDSSN…LAPSSDHDDG (64 aa)) are disordered. A compositionally biased stretch (low complexity) spans 386-400 (SVASMSSATPDSSAS). The C2H2-type 9; degenerate zinc finger occupies 437–461 (YSCPYCSKRDFNSLAVLEIHLKTIH). C2H2-type zinc fingers lie at residues 469–492 (HTCQ…RKAH), 513–536 (FHCN…RVSH), and 555–578 (FFCN…QQTH). A C2H2-type 13; atypical zinc finger spans residues 603-628 (YSCPYCTNSPIFGSLLKLTKHIKENH). 7 C2H2-type zinc fingers span residues 675-697 (YPCN…LKSH), 705-728 (QSCP…LTIH), 736-759 (YVCE…LDMH), 764-787 (YHCT…AVKH), 794-817 (YRCT…KHSH), 831-853 (RKCI…ITTH), and 857-880 (YNCR…REKH). Residues 885-895 (GGNGNGNGGSQ) are compositionally biased toward gly residues. The disordered stretch occupies residues 885–916 (GGNGNGNGGSQNGTPNGVTQSSKRSTAGSTAA). Polar residues predominate over residues 902–913 (VTQSSKRSTAGS). Residues 954-976 (YACDICGAAYTMESLLQNHRLRD) form a C2H2-type 21; degenerate zinc finger. 8 C2H2-type zinc fingers span residues 1000–1022 (HKCN…AQTH), 1029–1051 (YMCP…KVTH), 1090–1112 (FRCV…GTFH), 1201–1224 (LRCS…QVDH), 1249–1271 (YQCI…VANH), 1279–1301 (HECK…LIEH), 1310–1333 (FKCP…FAVH), and 1340–1363 (YDCS…LSQH).

This sequence belongs to the krueppel C2H2-type zinc-finger protein family.

The protein resides in the nucleus. Functionally, transcription factor that can both act as an activator or a repressor depending on the context. Plays a central role in BMP signaling and olfactory neurogenesis. Associates with SMADs in response to bmp2 leading to activate transcription of BMP target genes. Acts as a transcriptional repressor involved in terminal olfactory receptor neurons differentiation. Involved in olfactory neurogenesis by participating in a developmental switch that regulates the transition from differentiation to maturation in olfactory receptor neurons. The polypeptide is Zinc finger protein 423 (znf423) (Danio rerio (Zebrafish)).